We begin with the raw amino-acid sequence, 123 residues long: WAP four-disulfide core domain protein 5 (123 aa).

The first 24 residues, 1 to 24 (MRIQSLLLLGALLAVGSQLPAVFG), serve as a signal peptide directing secretion. WAP domains follow at residues 27-73 (KGEK…CVPR) and 74-121 (VSVK…RDPA). 8 disulfides stabilise this stretch: cysteine 34–cysteine 62, cysteine 41–cysteine 66, cysteine 49–cysteine 61, cysteine 55–cysteine 70, cysteine 81–cysteine 109, cysteine 88–cysteine 113, cysteine 96–cysteine 108, and cysteine 102–cysteine 117.

It localises to the secreted. Its function is as follows. Putative acid-stable proteinase inhibitor. The polypeptide is WAP four-disulfide core domain protein 5 (WFDC5) (Pongo abelii (Sumatran orangutan)).